We begin with the raw amino-acid sequence, 90 residues long: Chromosomal protein MC1c (90 aa).

Protects DNA against thermal denaturation and modulates transcription. This is Chromosomal protein MC1c from Methanothrix soehngenii (Methanosaeta concilii).